A 223-amino-acid chain; its full sequence is Neurotrophic factor BDNF precursor form (223 aa).

The signal sequence occupies residues 1–5 (SCMKA). Positions 6–114 (APMKEVSIRG…AANMSMRVRR (109 aa)) are excised as a propeptide. N107 is a glycosylation site (N-linked (GlcNAc...) asparagine). 2 cysteine pairs are disulfide-bonded: C127/C194 and C172/C223.

Belongs to the NGF-beta family.

The protein resides in the secreted. Functionally, promotes the survival of neuronal populations that are all located either in the central nervous system or directly connected to it. This Aspidites melanocephalus (Black-headed python) protein is Neurotrophic factor BDNF precursor form (BDNF).